A 149-amino-acid polypeptide reads, in one-letter code: MHCPFCSATDTKVIDSRLVADGHQVRRRRECVQCHERFTTFEGAELVMPRVVKQDGSRQPFDEEKLRGGMLRAVEKRPVSMDQIEQALTKIKSTLRATGEREVKSEMIGNLMMDQLVNLDKVAYIRFASVYRAFEDVSEFGEAIAKLQK.

A zinc finger spans residues 3-34 (CPFCSATDTKVIDSRLVADGHQVRRRRECVQC). An ATP-cone domain is found at 49-139 (PRVVKQDGSR…VYRAFEDVSE (91 aa)).

This sequence belongs to the NrdR family. The cofactor is Zn(2+).

Negatively regulates transcription of bacterial ribonucleotide reductase nrd genes and operons by binding to NrdR-boxes. The sequence is that of Transcriptional repressor NrdR from Shewanella pealeana (strain ATCC 700345 / ANG-SQ1).